Reading from the N-terminus, the 239-residue chain is Tetraspanin-9 (239 aa).

Residues 1–13 (MARGCLCCLKYMM) are Cytoplasmic-facing. Residues 14-34 (FLFNLIFWLCGCGLLGVGIWL) form a helical membrane-spanning segment. Over 35 to 55 (SVSQGNFATFSPSFPSLSAAN) the chain is Extracellular. A helical membrane pass occupies residues 56–76 (LVIAIGTIVMVTGFLGCLGAI). At 77–85 (KENRCLLLS) the chain is on the cytoplasmic side. The chain crosses the membrane as a helical span at residues 86–106 (FFIVLLIILLAELILIILFFV). At 107–203 (YMDKVNENAR…VKMWFDDNKH (97 aa)) the chain is on the extracellular side. Residue Asn-180 is glycosylated (N-linked (GlcNAc...) asparagine). The chain crosses the membrane as a helical span at residues 204–224 (VLGTVGMCILIMQILGMAFSM). Topologically, residues 225-239 (TLFQHIHRTGKKYDA) are cytoplasmic.

This sequence belongs to the tetraspanin (TM4SF) family. Found in a complex with GP6. Post-translationally, glycosylated.

It localises to the membrane. This chain is Tetraspanin-9 (TSPAN9), found in Sus scrofa (Pig).